The sequence spans 263 residues: MKKIHPSAVIEEGAQLGDDVVIEAYAYVGKDTKIGNDVIIKQGARILSDTTIGDHSRVFSYAIVGDIPQDISYKEEQKSGVVIGKNATIREFATINSGTAKGDGFTRIGDNAFIMAYCHIAHDCLLGNSIILANNATLAGHVELGDFTVVGGLTPIHQFVKIGEGCMIAGASALSQDIVPFCLAEGNRASIRSLNLVGIRRRFDKDEVDRLSRAFKTLFRQGDLKENAKNLLENQESENIKKMCHFILETKRGIPVYRGKNNA.

Belongs to the transferase hexapeptide repeat family. LpxA subfamily. In terms of assembly, homotrimer.

It localises to the cytoplasm. The enzyme catalyses a (3R)-hydroxyacyl-[ACP] + UDP-N-acetyl-alpha-D-glucosamine = a UDP-3-O-[(3R)-3-hydroxyacyl]-N-acetyl-alpha-D-glucosamine + holo-[ACP]. Its pathway is glycolipid biosynthesis; lipid IV(A) biosynthesis; lipid IV(A) from (3R)-3-hydroxytetradecanoyl-[acyl-carrier-protein] and UDP-N-acetyl-alpha-D-glucosamine: step 1/6. Involved in the biosynthesis of lipid A, a phosphorylated glycolipid that anchors the lipopolysaccharide to the outer membrane of the cell. The protein is Acyl-[acyl-carrier-protein]--UDP-N-acetylglucosamine O-acyltransferase of Campylobacter jejuni subsp. doylei (strain ATCC BAA-1458 / RM4099 / 269.97).